Consider the following 238-residue polypeptide: Large ribosomal subunit protein uL2 (238 aa).

The interval 198–238 (HPHGGGLHQSVSRPSTVSRNAPPGRKVGHIASRRTGRRGGA) is disordered. The span at 206–216 (QSVSRPSTVSR) shows a compositional bias: polar residues. Positions 223 to 238 (KVGHIASRRTGRRGGA) are enriched in basic residues.

This sequence belongs to the universal ribosomal protein uL2 family. In terms of assembly, part of the 50S ribosomal subunit. Forms a bridge to the 30S subunit in the 70S ribosome.

One of the primary rRNA binding proteins. Required for association of the 30S and 50S subunits to form the 70S ribosome, for tRNA binding and peptide bond formation. It has been suggested to have peptidyltransferase activity; this is somewhat controversial. Makes several contacts with the 16S rRNA in the 70S ribosome. This is Large ribosomal subunit protein uL2 from Sulfolobus acidocaldarius (strain ATCC 33909 / DSM 639 / JCM 8929 / NBRC 15157 / NCIMB 11770).